The primary structure comprises 463 residues: Probable glycosyltransferase 3 (463 aa).

The Cytoplasmic portion of the chain corresponds to 1–24; sequence MAVTGGGRPAVRQQAARGKQMQRT. A helical; Signal-anchor for type II membrane protein transmembrane segment spans residues 25–47; it reads FNNVKITLICGFITLLVLRGTVG. The Lumenal segment spans residues 48-463; sequence INLLTYGVGG…ALKMDAKIES (416 aa). Positions 82 to 125 are disordered; that stretch reads EIRSDTDDDDDDEEEEPLGVDASTTTTTNSTTTTATAARRRSSN. The span at 87–99 shows a compositional bias: acidic residues; sequence TDDDDDDEEEEPL. Positions 103–118 are enriched in low complexity; sequence ASTTTTTNSTTTTATA. Residues Asn-110, Asn-125, and Asn-442 are each glycosylated (N-linked (GlcNAc...) asparagine).

Belongs to the glycosyltransferase 34 family.

The protein localises to the golgi apparatus membrane. Probable glycosyltransferase that may be involved in the biosynthesis of xyloglucan. The sequence is that of Probable glycosyltransferase 3 from Oryza sativa subsp. japonica (Rice).